Consider the following 127-residue polypeptide: uncharacterized protein (127 aa).

The interval 1 to 24 (PLKTKPIDNNLPHRTGYNQASKQQ) is disordered.

This is an uncharacterized protein from Homo sapiens (Human).